Here is a 137-residue protein sequence, read N- to C-terminus: Small ribosomal subunit protein uS11 (137 aa).

The segment at 116–137 (EDVTPVPSDSTRKKGGRRGRRL) is disordered. Residues 128–137 (KKGGRRGRRL) are compositionally biased toward basic residues.

The protein belongs to the universal ribosomal protein uS11 family.

The sequence is that of Small ribosomal subunit protein uS11 (RPS14) from Kluyveromyces lactis (strain ATCC 8585 / CBS 2359 / DSM 70799 / NBRC 1267 / NRRL Y-1140 / WM37) (Yeast).